The chain runs to 623 residues: Low affinity potassium transport system protein Kup (623 aa).

The next 12 membrane-spanning stretches (helical) occupy residues 9–29 (LPAI…TSPL), 49–69 (VFGF…FKYL), 101–121 (VLVI…VITP), 137–157 (PSLD…LFMI), 163–183 (GMVG…LAVL), 212–232 (AVSF…EALY), 247–267 (WFSV…ALLL), 276–296 (PFFL…ATLA), 337–357 (IYIP…IVSF), 363–383 (LAAA…ILFA), 395–415 (ILVG…FSAN), and 419–439 (LFSG…IMTT).

The protein belongs to the HAK/KUP transporter (TC 2.A.72) family.

It localises to the cell inner membrane. The catalysed reaction is K(+)(in) + H(+)(in) = K(+)(out) + H(+)(out). In terms of biological role, responsible for the low-affinity transport of potassium into the cell. Likely operates as a K(+):H(+) symporter. The polypeptide is Low affinity potassium transport system protein Kup (Cronobacter sakazakii (strain ATCC BAA-894) (Enterobacter sakazakii)).